Here is a 483-residue protein sequence, read N- to C-terminus: Glycogen synthase (483 aa).

Lys18 lines the ADP-alpha-D-glucose pocket.

This sequence belongs to the glycosyltransferase 1 family. Bacterial/plant glycogen synthase subfamily.

It carries out the reaction [(1-&gt;4)-alpha-D-glucosyl](n) + ADP-alpha-D-glucose = [(1-&gt;4)-alpha-D-glucosyl](n+1) + ADP + H(+). It participates in glycan biosynthesis; glycogen biosynthesis. In terms of biological role, synthesizes alpha-1,4-glucan chains using ADP-glucose. The polypeptide is Glycogen synthase (Rhodopseudomonas palustris (strain TIE-1)).